A 305-amino-acid chain; its full sequence is Glutaminase 2 (305 aa).

Substrate is bound by residues serine 61, asparagine 113, glutamate 158, asparagine 165, tyrosine 189, tyrosine 241, and valine 259.

This sequence belongs to the glutaminase family. Homotetramer.

The enzyme catalyses L-glutamine + H2O = L-glutamate + NH4(+). This is Glutaminase 2 from Clostridium perfringens (strain 13 / Type A).